The sequence spans 207 residues: Ras-related protein Rab-7a (207 aa).

An N-acetylthreonine modification is found at T2. Positions 17, 18, 19, 20, 21, 22, 23, 34, 35, 37, and 40 each coordinate GTP. T22 serves as a coordination point for Mg(2+). Positions 28 to 41 (YVNKKFSNQYKATI) match the Switch 1 motif. Mg(2+)-binding residues include T40 and D63. Residue G66 coordinates GTP. The short motif at 67–82 (QERFQSLGVAFYRGAD) is the Switch 2 element. Residue S72 is modified to Phosphoserine. GTP-binding residues include N125, K126, D128, A156, and K157. Glycyl lysine isopeptide (Lys-Gly) (interchain with G-Cter in ubiquitin) cross-links involve residues K191 and K194. Residues C205 and C207 are each lipidated (S-geranylgeranyl cysteine). Cysteine methyl ester is present on C207.

Belongs to the small GTPase superfamily. Rab family. In terms of assembly, interacts with NTRK1/TRKA. Interacts with RILP. Interacts with PSMA7. Interacts with RNF115. Interacts with FYCO1. Interacts with the PIK3C3/VPS34-PIK3R4 complex. The GTP-bound form interacts with OSBPL1A. The GTP-bound form interacts with RAC1. Interacts with CLN3. Interacts with CHM, the substrate-binding subunit of the Rab geranylgeranyltransferase complex. Interacts with C9orf72. Does not interact with HPS4 and the BLOC-3 complex (heterodimer of HPS1 and HPS4). Interacts with CLN5. Interacts with PLEKHM1 (via N- and C-terminus). Interacts with PRPH; the interaction is direct. Interacts with VPS13A. The GDP-bound form interacts with RIMOC1. Interacts with the MON1A-CCZ1B complex and this interaction is enhanced in the presence of RIMOC1. Interacts with VPS39 and VPS41. Forms a ternary complex with LAMP2 and RUFY4; the interaction with LAMP2 is mediated by RUFY4 (via RUN and coiled coil domains). Requires Mg(2+) as cofactor. Post-translationally, deubiquitination at Lys-191 and Lys-194 by USP32. Phosphorylated at Ser-72 by LRRK1; phosphorylation is dependent on protein kinase C (PKC) activation of LRRK1. In terms of processing, prenylated. Prenylation is required for association with cellular membranes.

It is found in the cytoplasmic vesicle. The protein resides in the phagosome membrane. Its subcellular location is the late endosome membrane. It localises to the lysosome membrane. The protein localises to the melanosome membrane. It is found in the autophagosome membrane. The protein resides in the lipid droplet. Its subcellular location is the endosome membrane. It localises to the mitochondrion membrane. It carries out the reaction GTP + H2O = GDP + phosphate + H(+). Its activity is regulated as follows. Regulated by guanine nucleotide exchange factors (GEFs) which promote the exchange of bound GDP for free GTP. Regulated by GTPase activating proteins (GAPs) which increase the GTP hydrolysis activity. Inhibited by GDP dissociation inhibitors (GDIs). Its function is as follows. The small GTPases Rab are key regulators of intracellular membrane trafficking, from the formation of transport vesicles to their fusion with membranes. Rabs cycle between an inactive GDP-bound form and an active GTP-bound form that is able to recruit to membranes different sets of downstream effectors directly responsible for vesicle formation, movement, tethering and fusion. In its active state, RAB7A binds to a variety of effector proteins playing a key role in the regulation of endo-lysosomal trafficking. Governs early-to-late endosomal maturation, microtubule minus-end as well as plus-end directed endosomal migration and positioning, and endosome-lysosome transport through different protein-protein interaction cascades. Also plays a central role in growth-factor-mediated cell signaling, nutrient-transporter-mediated nutrient uptake, neurotrophin transport in the axons of neurons and lipid metabolism. Also involved in regulation of some specialized endosomal membrane trafficking, such as maturation of melanosomes, pathogen-induced phagosomes (or vacuoles) and autophagosomes. Plays a role in the maturation and acidification of phagosomes that engulf pathogens, such as S.aureus and Mycobacteria. Plays a role in the fusion of phagosomes with lysosomes. In concert with RAC1, plays a role in regulating the formation of RBs (ruffled borders) in osteoclasts. Controls the endosomal trafficking and neurite outgrowth signaling of NTRK1/TRKA. Regulates the endocytic trafficking of the EGF-EGFR complex by regulating its lysosomal degradation. Involved in the ADRB2-stimulated lipolysis through lipophagy, a cytosolic lipase-independent autophagic pathway. Required for the exosomal release of SDCBP, CD63 and syndecan. Required for vesicular trafficking and cell surface expression of ACE2. May play a role in PRPH neuronal intermediate filament assembly. This Canis lupus familiaris (Dog) protein is Ras-related protein Rab-7a (RAB7A).